We begin with the raw amino-acid sequence, 244 residues long: Phosphoadenosine 5'-phosphosulfate reductase (244 aa).

Cys239 serves as the catalytic Nucleophile; cysteine thiosulfonate intermediate.

Belongs to the PAPS reductase family. CysH subfamily.

Its subcellular location is the cytoplasm. The enzyme catalyses [thioredoxin]-disulfide + sulfite + adenosine 3',5'-bisphosphate + 2 H(+) = [thioredoxin]-dithiol + 3'-phosphoadenylyl sulfate. It participates in sulfur metabolism; hydrogen sulfide biosynthesis; sulfite from sulfate: step 3/3. Functionally, catalyzes the formation of sulfite from phosphoadenosine 5'-phosphosulfate (PAPS) using thioredoxin as an electron donor. This is Phosphoadenosine 5'-phosphosulfate reductase from Salmonella arizonae (strain ATCC BAA-731 / CDC346-86 / RSK2980).